The chain runs to 323 residues: Serine/threonine-protein phosphatase PP1-gamma catalytic subunit (323 aa).

A2 carries the post-translational modification N-acetylalanine. Mn(2+) contacts are provided by D64, H66, D92, and N124. H125 acts as the Proton donor in catalysis. Mn(2+) contacts are provided by H173 and H248. Residues 302–323 (KKPNATRPVTPPRGMITKQAKK) are disordered. T307 and T311 each carry phosphothreonine.

Belongs to the PPP phosphatase family. PP-1 subfamily. PP1 comprises a catalytic subunit, PPP1CA, PPP1CB or PPP1CC, which is folded into its native form by inhibitor 2 and glycogen synthetase kinase 3, and then complexed to one or several targeting or regulatory subunits. PPP1R12A, PPP1R12B and PPP1R12C mediate binding to myosin. PPP1R3A (in skeletal muscle), PPP1R3B (in liver), PPP1R3C, PPP1R3D and PPP1R3F (in brain) mediate binding to glycogen. Interacts with cyanobacterial toxin microcystin; disulfide-linked. Interacts with PPP1R3B and PPP1R7. Isoform 2 interacts with SPZ1. Interacts with CDCA2. PPP1R15A and PPP1R15B mediate binding to EIF2S1. Part of a complex containing PPP1R15B, PP1 and NCK1/2. Interacts with IKFZ1; the interaction targets PPP1CC to pericentromeric heterochromatin, dephosphorylates IKAROS, stabilizes it and prevents it from degradation. Interacts with PPP1R42; the interaction is direct. Interacts with NOM1 and PPP1R8. Component of the PTW/PP1 phosphatase complex, composed of PPP1R10/PNUTS, TOX4, WDR82, and PPP1CA or PPP1CB or PPP1CC. Interacts with PPP1R8. Interacts with isoform 1 and isoform 4 NEK2. Interacts with URI1; the interaction is phosphorylation-dependent and occurs in a growth factor-dependent manner. Interacts with FOXP3. Interacts with TMEM225 (via RVxF motif). Interacts with MKI67. Interacts with RRP1B; this targets PPP1CC to the nucleolus. Interacts with PPP1R2B. Found in a complex with PPP1CA, PPP1CC, SHC1 and PEAK1. Interacts with DYNLT4. Interacts (via RVxF motif) with FIRRM; regulates PLK1 kinase activity. Interacts with the KNL1 complex subunit KNL1; the interaction is direct and mutually exclusive with KNL1 binding to microtubules. Component of the SHOC2-MRAS-PP1c (SMP) complex consisting of SHOC2, GTP-bound M-Ras/MRAS and the catalytic subunit of protein phosphatase 1 (either PPP1CA, PPP1CB or PPP1CC). SHOC2 and PP1c preferably bind M-Ras/MRAS, but they also bind K-Ras/KRAS, N-Ras/NRAS and H-Ras/HRAS; these interactions are GTP-dependent and both SHOC2 and PP1c are required to form a stable complex. Interacts with SHOC2 in the absence of Ras GTPases. It depends on Mn(2+) as a cofactor. Phosphorylated by NEK2.

Its subcellular location is the cytoplasm. It is found in the nucleus. The protein resides in the nucleolus. The protein localises to the nucleoplasm. It localises to the nucleus speckle. Its subcellular location is the chromosome. It is found in the centromere. The protein resides in the kinetochore. The protein localises to the cleavage furrow. It localises to the midbody. Its subcellular location is the mitochondrion. It is found in the cytoskeleton. The protein resides in the microtubule organizing center. The enzyme catalyses O-phospho-L-seryl-[protein] + H2O = L-seryl-[protein] + phosphate. It catalyses the reaction O-phospho-L-threonyl-[protein] + H2O = L-threonyl-[protein] + phosphate. With respect to regulation, inactivated by binding to URI1. The phosphatase activity of the PPP1R15A-PP1 complex toward EIF2S1 is specifically inhibited by Salubrinal, a drug that protects cells from endoplasmic reticulum stress. Protein phosphatase that associates with over 200 regulatory proteins to form highly specific holoenzymes which dephosphorylate hundreds of biological targets. Protein phosphatase 1 (PP1) is essential for cell division, and participates in the regulation of glycogen metabolism, muscle contractility and protein synthesis. Dephosphorylates RPS6KB1. Involved in regulation of ionic conductances and long-term synaptic plasticity. May play an important role in dephosphorylating substrates such as the postsynaptic density-associated Ca(2+)/calmodulin dependent protein kinase II. Component of the PTW/PP1 phosphatase complex, which plays a role in the control of chromatin structure and cell cycle progression during the transition from mitosis into interphase. In balance with CSNK1D and CSNK1E, determines the circadian period length, through the regulation of the speed and rhythmicity of PER1 and PER2 phosphorylation. May dephosphorylate CSNK1D and CSNK1E. Regulates the recruitment of the SKA complex to kinetochores. Dephosphorylates the 'Ser-418' residue of FOXP3 in regulatory T-cells (Treg) from patients with rheumatoid arthritis, thereby inactivating FOXP3 and rendering Treg cells functionally defective. Together with PPP1CA (PP1-alpha subunit), dephosphorylates IFIH1/MDA5 and RIG-I leading to their activation and a functional innate immune response. Core component of the SHOC2-MRAS-PP1c (SMP) holophosphatase complex that regulates the MAPK pathway activation. The SMP complex specifically dephosphorylates the inhibitory phosphorylation at 'Ser-259' of RAF1 kinase, 'Ser-365' of BRAF kinase and 'Ser-214' of ARAF kinase, stimulating their kinase activities. Dephosphorylates MKI67 at the onset of anaphase. The SMP complex enhances the dephosphorylation activity and substrate specificity of PP1c. The chain is Serine/threonine-protein phosphatase PP1-gamma catalytic subunit (PPP1CC) from Homo sapiens (Human).